We begin with the raw amino-acid sequence, 396 residues long: NADH-quinone oxidoreductase subunit D (396 aa).

It belongs to the complex I 49 kDa subunit family. As to quaternary structure, NDH-1 is composed of 14 different subunits. Subunits NuoB, C, D, E, F, and G constitute the peripheral sector of the complex.

It localises to the cell inner membrane. It carries out the reaction a quinone + NADH + 5 H(+)(in) = a quinol + NAD(+) + 4 H(+)(out). NDH-1 shuttles electrons from NADH, via FMN and iron-sulfur (Fe-S) centers, to quinones in the respiratory chain. The immediate electron acceptor for the enzyme in this species is believed to be ubiquinone. Couples the redox reaction to proton translocation (for every two electrons transferred, four hydrogen ions are translocated across the cytoplasmic membrane), and thus conserves the redox energy in a proton gradient. The protein is NADH-quinone oxidoreductase subunit D of Rhizobium johnstonii (strain DSM 114642 / LMG 32736 / 3841) (Rhizobium leguminosarum bv. viciae).